The chain runs to 80 residues: Serine palmitoyltransferase small subunit B (80 aa).

Topologically, residues 1–11 (MDVKHIKDYLS) are cytoplasmic. A helical transmembrane segment spans residues 12 to 29 (WLYYQYLLITCSYVLEPW). Residues 30-36 (EQSIFNT) lie on the Lumenal side of the membrane. A helical transmembrane segment spans residues 37–57 (LLLTIIAMVIYSSYIFIPIHV). Residues 58–80 (RLAVEFFSGIFGGQHESTVALMS) are Cytoplasmic-facing.

This sequence belongs to the SPTSS family. SPTSSB subfamily. Component of the serine palmitoyltransferase (SPT) complex, which is composed of SPTLC1, SPTLC2 or SPTLC3 and SPTSSA or SPTSSB. The heterodimer consisting of SPTLC1 and SPTLC2/SPTLC3 forms the catalytic core of the enzyme, while SPTSSA or SPTSSB subunits determine substrate specificity. SPT also interacts with ORMDL proteins, especially ORMDL3, which negatively regulate SPT activity in the presence of ceramides.

It is found in the endoplasmic reticulum membrane. Its pathway is lipid metabolism; sphingolipid metabolism. Functionally, component of the serine palmitoyltransferase multisubunit enzyme (SPT) that catalyzes the initial and rate-limiting step in sphingolipid biosynthesis by condensing L-serine and activated acyl-CoA (most commonly palmitoyl-CoA) to form long-chain bases. The SPT complex is composed of SPTLC1, SPTLC2 or SPTLC3 and SPTSSA or SPTSSB. Within this complex, the heterodimer consisting of SPTLC1 and SPTLC2/SPTLC3 forms the catalytic core. Within the SPT complex, SPTSSB stimulates the catalytic activity and plays a role in substrate specificity. SPT complexes with this subunit showing a preference for longer acyl-CoAs. The SPTLC1-SPTLC2-SPTSSB complex shows a strong preference for C18-CoA substrate, while the SPTLC1-SPTLC3-SPTSSB isozyme displays an ability to use a broader range of acyl-CoAs, without apparent preference. The sequence is that of Serine palmitoyltransferase small subunit B (sptssb) from Xenopus tropicalis (Western clawed frog).